A 137-amino-acid polypeptide reads, in one-letter code: Phospholipase A2 group V (137 aa).

Positions 1–20 are cleaved as a signal peptide; that stretch reads MKGLLTLAWFLACSVPAVPG. Cystine bridges form between Cys-46–Cys-137, Cys-48–Cys-64, Cys-63–Cys-117, Cys-70–Cys-110, Cys-79–Cys-103, and Cys-97–Cys-108. Residues Tyr-47, Gly-49, and Gly-51 each contribute to the Ca(2+) site. His-67 is an active-site residue. Asp-68 provides a ligand contact to Ca(2+). Asp-111 is an active-site residue.

It belongs to the phospholipase A2 family. Requires Ca(2+) as cofactor. This enzyme lacks one of the seven disulfide bonds found in similar PA2 proteins. Expressed in peritoneal macrophages (at protein level). Expressed in heart, skeletal muscle and white adipose tissue.

It localises to the secreted. The protein resides in the cell membrane. The protein localises to the cytoplasmic vesicle. Its subcellular location is the phagosome. It is found in the recycling endosome. It localises to the golgi apparatus. The protein resides in the cis-Golgi network. The protein localises to the trans-Golgi network. It carries out the reaction a 1,2-diacyl-sn-glycero-3-phosphocholine + H2O = a 1-acyl-sn-glycero-3-phosphocholine + a fatty acid + H(+). It catalyses the reaction 1-hexadecanoyl-2-(9Z-octadecenoyl)-sn-glycero-3-phosphocholine + H2O = 1-hexadecanoyl-sn-glycero-3-phosphocholine + (9Z)-octadecenoate + H(+). The catalysed reaction is 1-hexadecanoyl-2-(5Z,8Z,11Z,14Z-eicosatetraenoyl)-sn-glycero-3-phosphocholine + H2O = 1-hexadecanoyl-sn-glycero-3-phosphocholine + (5Z,8Z,11Z,14Z)-eicosatetraenoate + H(+). The enzyme catalyses 1-hexadecanoyl-2-(9Z,12Z-octadecadienoyl)-sn-glycero-3-phosphoethanolamine + H2O = 1-hexadecanoyl-sn-glycero-3-phosphoethanolamine + (9Z,12Z)-octadecadienoate + H(+). It carries out the reaction 1-hexadecanoyl-2-(5Z,8Z,11Z,14Z-eicosatetraenoyl)-sn-glycero-3-phosphoethanolamine + H2O = 1-hexadecanoyl-sn-glycero-3-phosphoethanolamine + (5Z,8Z,11Z,14Z)-eicosatetraenoate + H(+). It catalyses the reaction 1-octadecanoyl-2-(5Z,8Z,11Z,14Z-eicosatetraenoyl)-sn-glycero-3-phospho-(1D-myo-inositol) + H2O = 1-octadecanoyl-sn-glycero-3-phospho-(1D-myo-inositol) + (5Z,8Z,11Z,14Z)-eicosatetraenoate + H(+). The catalysed reaction is 1-hexadecanoyl-2-(9Z-octadecenoyl)-sn-glycero-3-phosphoglycerol + H2O = 1-hexadecanoyl-sn-glycero-3-phosphoglycerol + (9Z)-octadecenoate + H(+). The enzyme catalyses N-hexadecanoyl-1,2-di-(9Z-octadecenoyl)-sn-glycero-3-phosphoethanolamine + H2O = N-hexadecanoyl-1-(9Z-octadecenoyl)-sn-glycero-3-phosphoethanolamine + (9Z)-octadecenoate + H(+). It carries out the reaction 1'-[1,2-di-(9Z-octadecenoyl)-sn-glycero-3-phospho]-3'-[1-(9Z-octadecenoyl)-sn-glycero-3-phospho]-glycerol + H2O = 1',3'-bis-[1-(9Z-octadecenoyl)-sn-glycero-3-phospho]-glycerol + (9Z)-octadecenoate + H(+). It catalyses the reaction 1',3'-bis[1,2-di-(9Z-octadecenoyl)-sn-glycero-3-phospho]-glycerol + H2O = 1'-[1,2-di-(9Z-octadecenoyl)-sn-glycero-3-phospho]-3'-[1-(9Z-octadecenoyl)-sn-glycero-3-phospho]-glycerol + (9Z)-octadecenoate + H(+). It participates in lipid metabolism; phospholipid metabolism. The protein operates within lipid metabolism; leukotriene B4 biosynthesis. It functions in the pathway lipid metabolism; leukotriene C4 biosynthesis. Its function is as follows. Secretory calcium-dependent phospholipase A2 that primarily targets extracellular phospholipids. Hydrolyzes the ester bond of the fatty acyl group attached at sn-2 position of phospholipids (phospholipase A2 activity), preferentially releasing fatty acyl groups with a low degree of unsaturation such as oleoyl (C18:1) and linoleoyl (C18:2) groups. Hydrolyzes low-density lipoprotein (LDL) phospholipids releasing unsaturated fatty acids that drive macrophage polarization toward an M2 phenotype. May act in an autocrine and paracrine manner. Contributes to lipid remodeling of cellular membranes at different subcellular locations and generation of lipid mediators involved in pathogen clearance. Cleaves sn-2 fatty acyl chains of cardiolipin, a major component of the inner membrane of mitochondria and bacterial membranes. Promotes phagocytosis of bacteria in macrophages through production of lysophosphatidylethanolamines. Displays bactericidal activity against Gram-positive bacteria by directly hydrolyzing the phospholipids of the bacterial membrane. Promotes phagocytosis and killing of ingested fungi likely through controlling phagosome-lysosome fusion and phagosome maturation. Plays a role in biosynthesis of cysteinyl leukotrienes (CysLTs) in myeloid cells. In eosinophils, triggers perinuclear arachidonate release and LTC4 synthesis in a PLA2G4A-independent way. In neutrophils, amplifies CysLTs biosynthesis initiated by PLA2G4A. Promotes immune complex clearance in macrophages via stimulating synthesis of CysLTs, which act through CYSLTR1 to trigger phagocytosis. May regulate antigen processing in antigen-presenting cells. In pulmonary macrophages regulates IL33 production required for activation of group 2 innate lymphoid cells. May play a role in the biosynthesis of N-acyl ethanolamines that regulate energy metabolism. Hydrolyzes N-acyl phosphatidylethanolamines to N-acyl lysophosphatidylethanolamines, which are further cleaved by a lysophospholipase D to release N-acyl ethanolamines. The sequence is that of Phospholipase A2 group V (Pla2g5) from Mus musculus (Mouse).